Reading from the N-terminus, the 120-residue chain is Large ribosomal subunit protein eL34z (120 aa).

The interval Val-31–Ile-51 is disordered.

The protein belongs to the eukaryotic ribosomal protein eL34 family.

In Arabidopsis thaliana (Mouse-ear cress), this protein is Large ribosomal subunit protein eL34z (RPL34A).